The following is a 279-amino-acid chain: Movement protein (279 aa).

Belongs to the cucumovirus movement protein family.

It localises to the host cell junction. The protein localises to the host plasmodesma. In terms of biological role, transports viral genome to neighboring plant cells directly through plasmosdesmata, without any budding. The movement protein allows efficient cell to cell propagation, by bypassing the host cell wall barrier. Acts by forming a tubular structure at the host plasmodesmata, enlarging it enough to allow free passage of virion capsids. The sequence is that of Movement protein from Cucumber mosaic virus (strain Ixora) (CMV).